The chain runs to 102 residues: Urease subunit beta (102 aa).

It belongs to the urease beta subunit family. As to quaternary structure, heterotrimer of UreA (gamma), UreB (beta) and UreC (alpha) subunits. Three heterotrimers associate to form the active enzyme.

It localises to the cytoplasm. It carries out the reaction urea + 2 H2O + H(+) = hydrogencarbonate + 2 NH4(+). It participates in nitrogen metabolism; urea degradation; CO(2) and NH(3) from urea (urease route): step 1/1. The protein is Urease subunit beta of Pseudomonas savastanoi pv. phaseolicola (strain 1448A / Race 6) (Pseudomonas syringae pv. phaseolicola (strain 1448A / Race 6)).